A 247-amino-acid polypeptide reads, in one-letter code: Probable dihydroorotate dehydrogenase B (NAD(+)), electron transfer subunit (247 aa).

In terms of domain architecture, FAD-binding FR-type spans 1 to 87 (MLRRVTLKET…RGPYGNGFKE (87 aa)). Positions 200, 205, 208, and 216 each coordinate [2Fe-2S] cluster.

This sequence belongs to the PyrK family. As to quaternary structure, heterotetramer of 2 PyrK and 2 PyrD type B subunits. It depends on [2Fe-2S] cluster as a cofactor. FAD is required as a cofactor.

Its pathway is pyrimidine metabolism; UMP biosynthesis via de novo pathway; orotate from (S)-dihydroorotate (NAD(+) route): step 1/1. In terms of biological role, responsible for channeling the electrons from the oxidation of dihydroorotate from the FMN redox center in the PyrD type B subunit to the ultimate electron acceptor NAD(+). In Pyrococcus horikoshii (strain ATCC 700860 / DSM 12428 / JCM 9974 / NBRC 100139 / OT-3), this protein is Probable dihydroorotate dehydrogenase B (NAD(+)), electron transfer subunit.